A 570-amino-acid chain; its full sequence is Berberine bridge enzyme-like 19 (570 aa).

A signal peptide spans Met1 to Ser30. The cysteines at positions 42 and 105 are disulfide-linked. N-linked (GlcNAc...) asparagine glycosylation is present at Asn80. Residues Ser83–Val257 form the FAD-binding PCMH-type domain. Positions His120–Cys182 form a cross-link, 6-(S-cysteinyl)-8alpha-(pros-histidyl)-FAD (His-Cys). Residues Asn341 and Asn359 are each glycosylated (N-linked (GlcNAc...) asparagine).

The protein belongs to the oxygen-dependent FAD-linked oxidoreductase family. FAD serves as cofactor. The FAD cofactor is bound via a bicovalent 6-S-cysteinyl, 8alpha-N1-histidyl FAD linkage.

It is found in the secreted. Its subcellular location is the cell wall. This is Berberine bridge enzyme-like 19 from Arabidopsis thaliana (Mouse-ear cress).